The following is an 806-amino-acid chain: MATERLTRVHSLRERLDETLTANRNEILALLSRIEAKGKGILQHHQVIAEFEEIPEENRQKLTDGAFGEVLRSTQEAIVLPPWVALAVRPRPGVWEYLRVNVHALVVENLQPAEFLKFKEELVDGSANGNFVLELDFEPFTASFPRPTLNKSIGNGVQFLNRHLSAKLFHDKESLHPLLEFLRLHSYKGKTLMLNDRIQNPDSLQHVLRKAEEYLSTVDPETPYSEFEHRFQEIGLERGWGDSAERVLESIQLLLDLLEAPDPCTLETFLDRIPMVFNVVILSPHGYFAQDDVLGYPDTGGQVVYILDQVRALESEMLNRIKKQGLDIVPRILIITRLLPDAVGTTCGQRLEKVYGTEHCHILRVPFRDQKGIVRKWISRFEVWPYLETYTEDVAHELAKELQGKPDLIVGNYSDGNIVASLLAHKLGVTQCTIAHALEKTKYPESDIYWKKFEEKYHFSCQFTADLFAMNHTDFIITSTFQEIAGSKDTVGQYESHTAFTLPGLYRVVHGIDVFDPKFNIVSPGADQTIYFPYTETSRRLTSFYPEIEELLYSTVENEEHICVLKDRSKPIIFTMARLDRVKNITGLVEWYGKNAKLRELVNLVVVAGDRRKESKDLEEKAEMKKMYELIETYKLNGQFRWISSQMNRVRNGELYRVICDTKGAFVQPAVYEAFGLTVVEAMATGLPTFATLNGGPAEIIVHGKSGFHIDPYHGDRAADLLVEFFEKVKADPSHWDKISLGGLQRIEEKYTWQIYSQRLLTLTGVYGFWKHVSNLDRLESRRYLEMFYALKYRKLAESVPLAVEE.

The GT-B glycosyltransferase stretch occupies residues 275 to 752 (MVFNVVILSP…GLQRIEEKYT (478 aa)).

Belongs to the glycosyltransferase 1 family. Plant sucrose synthase subfamily.

It catalyses the reaction an NDP-alpha-D-glucose + D-fructose = a ribonucleoside 5'-diphosphate + sucrose + H(+). Sucrose-cleaving enzyme that provides UDP-glucose and fructose for various metabolic pathways. This is Sucrose synthase (SUCS) from Vicia faba (Broad bean).